The sequence spans 341 residues: tRNA N6-adenosine threonylcarbamoyltransferase (341 aa).

Residues His115 and His119 each contribute to the Fe cation site. Substrate contacts are provided by residues 138 to 142 (VVSGG), Asp171, Gly184, Asp188, and Asn279. Fe cation is bound at residue Asp307.

Belongs to the KAE1 / TsaD family. Fe(2+) serves as cofactor.

It is found in the cytoplasm. It carries out the reaction L-threonylcarbamoyladenylate + adenosine(37) in tRNA = N(6)-L-threonylcarbamoyladenosine(37) in tRNA + AMP + H(+). Its function is as follows. Required for the formation of a threonylcarbamoyl group on adenosine at position 37 (t(6)A37) in tRNAs that read codons beginning with adenine. Is involved in the transfer of the threonylcarbamoyl moiety of threonylcarbamoyl-AMP (TC-AMP) to the N6 group of A37, together with TsaE and TsaB. TsaD likely plays a direct catalytic role in this reaction. This Clostridium kluyveri (strain NBRC 12016) protein is tRNA N6-adenosine threonylcarbamoyltransferase.